The chain runs to 357 residues: Beta-hexosaminidase (357 aa).

Residues D66, R74, R140, and 170-171 (KH) contribute to the substrate site. H183 functions as the Proton donor/acceptor in the catalytic mechanism. D254 acts as the Nucleophile in catalysis.

It belongs to the glycosyl hydrolase 3 family. NagZ subfamily.

The protein resides in the cytoplasm. The enzyme catalyses Hydrolysis of terminal non-reducing N-acetyl-D-hexosamine residues in N-acetyl-beta-D-hexosaminides.. It participates in cell wall biogenesis; peptidoglycan recycling. Its function is as follows. Plays a role in peptidoglycan recycling by cleaving the terminal beta-1,4-linked N-acetylglucosamine (GlcNAc) from peptide-linked peptidoglycan fragments, giving rise to free GlcNAc, anhydro-N-acetylmuramic acid and anhydro-N-acetylmuramic acid-linked peptides. In Chromobacterium violaceum (strain ATCC 12472 / DSM 30191 / JCM 1249 / CCUG 213 / NBRC 12614 / NCIMB 9131 / NCTC 9757 / MK), this protein is Beta-hexosaminidase.